A 331-amino-acid chain; its full sequence is DNA-directed RNA polymerase subunit alpha (331 aa).

The segment at 1 to 237 (MQSFEKEFLK…DQLSSFIDLK (237 aa)) is alpha N-terminal domain (alpha-NTD). The tract at residues 251–331 (FDPSLLNLVD…NWPPKHLSEQ (81 aa)) is alpha C-terminal domain (alpha-CTD).

The protein belongs to the RNA polymerase alpha chain family. As to quaternary structure, homodimer. The RNAP catalytic core consists of 2 alpha, 1 beta, 1 beta' and 1 omega subunit. When a sigma factor is associated with the core the holoenzyme is formed, which can initiate transcription.

The catalysed reaction is RNA(n) + a ribonucleoside 5'-triphosphate = RNA(n+1) + diphosphate. DNA-dependent RNA polymerase catalyzes the transcription of DNA into RNA using the four ribonucleoside triphosphates as substrates. The protein is DNA-directed RNA polymerase subunit alpha of Blochmanniella floridana.